We begin with the raw amino-acid sequence, 404 residues long: NADH-quinone oxidoreductase subunit D 2 (404 aa).

Belongs to the complex I 49 kDa subunit family. NDH-1 is composed of 14 different subunits. Subunits NuoB, C, D, E, F, and G constitute the peripheral sector of the complex.

It is found in the cell inner membrane. It carries out the reaction a quinone + NADH + 5 H(+)(in) = a quinol + NAD(+) + 4 H(+)(out). In terms of biological role, NDH-1 shuttles electrons from NADH, via FMN and iron-sulfur (Fe-S) centers, to quinones in the respiratory chain. The immediate electron acceptor for the enzyme in this species is believed to be ubiquinone. Couples the redox reaction to proton translocation (for every two electrons transferred, four hydrogen ions are translocated across the cytoplasmic membrane), and thus conserves the redox energy in a proton gradient. The protein is NADH-quinone oxidoreductase subunit D 2 of Rhizobium etli (strain ATCC 51251 / DSM 11541 / JCM 21823 / NBRC 15573 / CFN 42).